The sequence spans 209 residues: ATP-dependent Clp protease proteolytic subunit (209 aa).

Catalysis depends on Ser106, which acts as the Nucleophile. His131 is an active-site residue.

The protein belongs to the peptidase S14 family. Fourteen ClpP subunits assemble into 2 heptameric rings which stack back to back to give a disk-like structure with a central cavity, resembling the structure of eukaryotic proteasomes.

It is found in the cytoplasm. The catalysed reaction is Hydrolysis of proteins to small peptides in the presence of ATP and magnesium. alpha-casein is the usual test substrate. In the absence of ATP, only oligopeptides shorter than five residues are hydrolyzed (such as succinyl-Leu-Tyr-|-NHMec, and Leu-Tyr-Leu-|-Tyr-Trp, in which cleavage of the -Tyr-|-Leu- and -Tyr-|-Trp bonds also occurs).. Functionally, cleaves peptides in various proteins in a process that requires ATP hydrolysis. Has a chymotrypsin-like activity. Plays a major role in the degradation of misfolded proteins. The sequence is that of ATP-dependent Clp protease proteolytic subunit from Caulobacter vibrioides (strain ATCC 19089 / CIP 103742 / CB 15) (Caulobacter crescentus).